A 146-amino-acid polypeptide reads, in one-letter code: Phospholipase A2 PS22 (146 aa).

Residues 1–19 (MYPAHLLVLLAVCVSLLGA) form the signal peptide. Residues 20 to 27 (ASVPPQPL) constitute a propeptide that is removed on maturation. 7 disulfide bridges follow: C38–C98, C54–C145, C56–C72, C71–C126, C78–C119, C87–C112, and C105–C117. Ca(2+) contacts are provided by Y55, G57, and G59. H75 is a catalytic residue. Residue D76 participates in Ca(2+) binding. D120 is a catalytic residue.

It belongs to the phospholipase A2 family. Group I subfamily. D49 sub-subfamily. It depends on Ca(2+) as a cofactor. Expressed by the venom gland.

The protein resides in the secreted. The catalysed reaction is a 1,2-diacyl-sn-glycero-3-phosphocholine + H2O = a 1-acyl-sn-glycero-3-phosphocholine + a fatty acid + H(+). Functionally, snake venom phospholipase A2 (PLA2) that inhibits collagen-induced platelet aggregation. PLA2 catalyzes the calcium-dependent hydrolysis of the 2-acyl groups in 3-sn-phosphoglycerides. This Drysdalia coronoides (White-lipped snake) protein is Phospholipase A2 PS22.